We begin with the raw amino-acid sequence, 205 residues long: Small ribosomal subunit protein uS4 (205 aa).

The disordered stretch occupies residues 19-45; the sequence is IWGRPKSPVNRREYGPGQHGQRRKGKL. One can recognise an S4 RNA-binding domain in the interval 94 to 157; sequence RRLDAVVYRA…KQLAFVLEAS (64 aa).

In terms of assembly, part of the 30S ribosomal subunit. Contacts protein S5. The interaction surface between S4 and S5 is involved in control of translational fidelity. May be methylated on an undetermined residue.

One of the primary rRNA binding proteins, it binds directly to 16S rRNA where it nucleates assembly of the body of the 30S subunit. Its function is as follows. With S5 and S12 plays an important role in translational accuracy. The protein is Small ribosomal subunit protein uS4 of Rhodopseudomonas palustris (strain ATCC BAA-98 / CGA009).